We begin with the raw amino-acid sequence, 101 residues long: Replication restart protein PriB (101 aa).

The 101-residue stretch at 1 to 101 (MTTNNLVLAG…LHAENVELKT (101 aa)) folds into the SSB domain.

Belongs to the PriB family. In terms of assembly, homodimer. Interacts with PriA and DnaT. Component of the replication restart primosome. Primosome assembly occurs via a 'hand-off' mechanism. PriA binds to replication forks, subsequently PriB then DnaT bind; DnaT then displaces ssDNA to generate the helicase loading substrate.

Involved in the restart of stalled replication forks, which reloads the replicative helicase on sites other than the origin of replication; the PriA-PriB pathway is the major replication restart pathway. During primosome assembly it facilitates complex formation between PriA and DnaT on DNA; stabilizes PriA on DNA. Stimulates the DNA unwinding activity of PriA helicase. The chain is Replication restart protein PriB from Shewanella piezotolerans (strain WP3 / JCM 13877).